We begin with the raw amino-acid sequence, 388 residues long: S-adenosylmethionine synthase (388 aa).

ATP is bound at residue His-16. Asp-18 contacts Mg(2+). Residue Glu-44 participates in K(+) binding. Residues Glu-57 and Gln-100 each coordinate L-methionine. The segment at 100-110 is flexible loop; that stretch reads QSPEIAQGVDR. Residues 165 to 167, 231 to 232, Asp-240, 246 to 247, Ala-263, and Lys-267 each bind ATP; these read DAK, KF, and RK. Asp-240 provides a ligand contact to L-methionine. Lys-271 serves as a coordination point for L-methionine.

Belongs to the AdoMet synthase family. As to quaternary structure, homotetramer; dimer of dimers. It depends on Mg(2+) as a cofactor. Requires K(+) as cofactor.

The protein localises to the cytoplasm. It carries out the reaction L-methionine + ATP + H2O = S-adenosyl-L-methionine + phosphate + diphosphate. Its pathway is amino-acid biosynthesis; S-adenosyl-L-methionine biosynthesis; S-adenosyl-L-methionine from L-methionine: step 1/1. In terms of biological role, catalyzes the formation of S-adenosylmethionine (AdoMet) from methionine and ATP. The overall synthetic reaction is composed of two sequential steps, AdoMet formation and the subsequent tripolyphosphate hydrolysis which occurs prior to release of AdoMet from the enzyme. The polypeptide is S-adenosylmethionine synthase (Psychrobacter arcticus (strain DSM 17307 / VKM B-2377 / 273-4)).